The chain runs to 646 residues: Beta-galactosidase-1-like protein (646 aa).

The N-terminal stretch at M1–A23 is a signal peptide. Residue N93 is glycosylated (N-linked (GlcNAc...) asparagine). E182 (proton donor) is an active-site residue. N239 carries an N-linked (GlcNAc...) asparagine glycan. The active-site Nucleophile is the E260.

This sequence belongs to the glycosyl hydrolase 35 family.

The protein localises to the secreted. In terms of biological role, probable glycosyl hydrolase. The polypeptide is Beta-galactosidase-1-like protein (Glb1l) (Mus musculus (Mouse)).